The primary structure comprises 282 residues: 1-deoxy-11-beta-hydroxypentalenate dehydrogenase (282 aa).

Residue 12–36 (GAASGIGLALSARFARAGAGVVMAD) participates in NAD(+) binding. Residue Ser144 coordinates substrate. The Proton acceptor role is filled by Tyr157. An NAD(+)-binding site is contributed by Lys161. A disordered region spans residues 258-282 (PPPSPEEELWPVPKTTTATTATTKH). The segment covering 267–282 (WPVPKTTTATTATTKH) has biased composition (low complexity).

The protein belongs to the short-chain dehydrogenases/reductases (SDR) family.

It catalyses the reaction 1-deoxy-11beta-hydroxypentalenate + NAD(+) = 1-deoxy-11-oxopentalenate + NADH + H(+). It functions in the pathway antibiotic biosynthesis; pentalenolactone biosynthesis. Its function is as follows. Catalyzes the oxidation of 1-deoxy-11-beta-hydroxypentalenic acid to 1-deoxy-11-oxopentalenic acid in the biosynthesis of pentalenolactone antibiotic. This is 1-deoxy-11-beta-hydroxypentalenate dehydrogenase (pntF) from Streptomyces arenae.